Reading from the N-terminus, the 256-residue chain is MASKDVEEGVEGPICWICREEVGNEGIHPCACTGELDVVHPQCLSTWLTVSRNTACQMCRVIYRTRTQWRSRLNLWPEMERQEIFELFLLMSVVVAGLVGVALCTWTLLVILTAPAGTFSPGAVLGFLCFFGFYQIFIVFAFGGICRVSGTVRALYAANNTRVTVLPYRRPRRPTANEDNIELTVLVGPAGGTDEEPTDESSEGDVASGDKERDGSSGDEPDGGPNDRAGLRGTARTDLCAPTKKPVRKNHPKNNG.

Residues 1-83 (MASKDVEEGV…NLWPEMERQE (83 aa)) lie on the Cytoplasmic side of the membrane. The RING-CH-type zinc finger occupies 7–66 (EEGVEGPICWICREEVGNEGIHPCACTGELDVVHPQCLSTWLTVSRNTACQMCRVIYRTR). 8 residues coordinate Zn(2+): C15, C18, C30, C32, H40, C43, C56, and C59. The chain crosses the membrane as a helical span at residues 84 to 104 (IFELFLLMSVVVAGLVGVALC). At 105 to 124 (TWTLLVILTAPAGTFSPGAV) the chain is on the extracellular side. A helical membrane pass occupies residues 125–145 (LGFLCFFGFYQIFIVFAFGGI). Over 146–256 (CRVSGTVRAL…VRKNHPKNNG (111 aa)) the chain is Cytoplasmic. Residues 179–256 (DNIELTVLVG…VRKNHPKNNG (78 aa)) are disordered. Residues 193–203 (TDEEPTDESSE) are compositionally biased toward acidic residues. The segment covering 245–256 (KPVRKNHPKNNG) has biased composition (basic residues).

In terms of assembly, binds human MHC-I, CD86, ICAM1 and CD1D.

It localises to the host cell membrane. The protein resides in the host endoplasmic reticulum. It carries out the reaction S-ubiquitinyl-[E2 ubiquitin-conjugating enzyme]-L-cysteine + [acceptor protein]-L-lysine = [E2 ubiquitin-conjugating enzyme]-L-cysteine + N(6)-ubiquitinyl-[acceptor protein]-L-lysine.. It participates in protein modification; protein ubiquitination. Its function is as follows. Membrane-bound E3 ubiquitin ligase expressed at the immediate early stage of viral reactivation to mediate polyubiquitination of various host membrane proteins related to the immune response. Promotes ubiquitination and subsequent degradation of host MHC-I, CD86, DC-SIGN and DC-SIGNR, ICAM1 and CD1D molecules, presumably to prevent lysis of infected cells by cytotoxic T-lymphocytes and NK cell. Plays a role in the down-regulation of the host stress-induced NKG2D ligands MICA, MICB and CLEC2B, which enable immune cells expressing the NKG2D receptor to recognize and annihilate infected cells prior to viral spread. Alters monocyte metabolism and proliferation by mediating rapid internalization of cellular growth factor-binding receptor tyrosine kinases from the surface leading to increased signaling. The chain is E3 ubiquitin-protein ligase MIR2 (K5) from Homo sapiens (Human).